A 266-amino-acid chain; its full sequence is Chymotrypsin-like elastase family member 1 (266 aa).

An N-terminal signal peptide occupies residues M1–S16. Positions T17–R26 are cleaved as a propeptide — activation peptide. In terms of domain architecture, Peptidase S1 spans V27–A264. An intrachain disulfide couples C56 to C72. H71 functions as the Charge relay system in the catalytic mechanism. Ca(2+) contacts are provided by E85, N87, Q90, and E95. The N-linked (GlcNAc...) asparagine glycan is linked to N87. D119 functions as the Charge relay system in the catalytic mechanism. 3 disulfides stabilise this stretch: C153/C220, C184/C200, and C210/C240. S214 functions as the Charge relay system in the catalytic mechanism.

Belongs to the peptidase S1 family. Elastase subfamily. Requires Ca(2+) as cofactor.

The protein localises to the secreted. It carries out the reaction Hydrolysis of proteins, including elastin. Preferential cleavage: Ala-|-Xaa.. Its function is as follows. Serine proteases that hydrolyze many proteins in addition to elastin. The polypeptide is Chymotrypsin-like elastase family member 1 (Cela1) (Mus musculus (Mouse)).